Consider the following 361-residue polypeptide: Endo-1,4-beta-xylanase 2 (361 aa).

Residues methionine 1 to serine 26 form the signal peptide. One can recognise a GH10 domain in the interval isoleucine 46–threonine 354. 2 N-linked (GlcNAc...) asparagine glycosylation sites follow: asparagine 88 and asparagine 130. Glutamate 160 functions as the Proton donor in the catalytic mechanism. Residue glutamate 276 is the Nucleophile of the active site. A disulfide bridge connects residues cysteine 304 and cysteine 310.

It belongs to the glycosyl hydrolase 10 (cellulase F) family.

The protein localises to the secreted. The catalysed reaction is Endohydrolysis of (1-&gt;4)-beta-D-xylosidic linkages in xylans.. It participates in glycan degradation; xylan degradation. Its function is as follows. Endo-1,4-beta-xylanase involved in the hydrolysis of xylan, a major structural heterogeneous polysaccharide found in plant biomass representing the second most abundant polysaccharide in the biosphere, after cellulose. Hydrolyzes birch-wood xylan, with a similar activity toward oat-spelt xylan. Also shows weak activities toward pNP-beta-D-cellobioside and pNP-beta-D-xylopyranoside, but no detectable activity toward carboxymethyl cellulose and pNP-beta-L-arabinofuranoside.-. In Aureobasidium pullulans (Black yeast), this protein is Endo-1,4-beta-xylanase 2 (xynII).